The following is a 327-amino-acid chain: PDZ and LIM domain protein 1 (327 aa).

Position 2 is an N-acetylthreonine (T2). The 83-residue stretch at 3–85 (TQQIVLQGPG…NMTLTVSRSE (83 aa)) folds into the PDZ domain. 2 positions are modified to phosphoserine: S90 and S130. At Y142 the chain carries Phosphotyrosine. Residues 161-184 (VESKTSASGEEANSRPVVQPHPSG) are disordered. The LIM zinc-binding domain occupies 256-315 (PICDKCGTGIVGVFVKLRDHHRHPECYVCTDCGINLKQKGHFFVEDQIYCEKHARERVTP). C258, C261, H278, C281, C284, C287, C305, and H308 together coordinate Zn(2+). A Phosphothreonine modification is found at T314. Residue Y319 is modified to Phosphotyrosine.

As to quaternary structure, interacts with ACTN1, ACTN2 and ACTN4. Interacts with PDLIM4. As to expression, expressed in heart, lung, spleen, testis and skeletal muscle.

Its subcellular location is the cytoplasm. It is found in the cytoskeleton. It localises to the myofibril. The protein localises to the sarcomere. The protein resides in the z line. Functionally, cytoskeletal protein that may act as an adapter that brings other proteins (like kinases) to the cytoskeleton. Involved in assembly, disassembly and directioning of stress fibers in fibroblasts. Required for the localization of ACTN1 and PALLD to stress fibers. Required for cell migration and in maintaining cell polarity of fibroblasts. In Mus musculus (Mouse), this protein is PDZ and LIM domain protein 1 (Pdlim1).